The chain runs to 164 residues: UPF0304 protein ESA_00925 (164 aa).

This sequence belongs to the UPF0304 family.

The chain is UPF0304 protein ESA_00925 from Cronobacter sakazakii (strain ATCC BAA-894) (Enterobacter sakazakii).